A 172-amino-acid chain; its full sequence is Adenine phosphoribosyltransferase (172 aa).

Belongs to the purine/pyrimidine phosphoribosyltransferase family. In terms of assembly, homodimer.

It localises to the cytoplasm. The enzyme catalyses AMP + diphosphate = 5-phospho-alpha-D-ribose 1-diphosphate + adenine. It functions in the pathway purine metabolism; AMP biosynthesis via salvage pathway; AMP from adenine: step 1/1. In terms of biological role, catalyzes a salvage reaction resulting in the formation of AMP, that is energically less costly than de novo synthesis. The chain is Adenine phosphoribosyltransferase from Methanococcus maripaludis (strain DSM 14266 / JCM 13030 / NBRC 101832 / S2 / LL).